The primary structure comprises 404 residues: NADH-quinone oxidoreductase subunit D 1 (404 aa).

It belongs to the complex I 49 kDa subunit family. In terms of assembly, NDH-1 is composed of 14 different subunits. Subunits NuoB, C, D, E, F, and G constitute the peripheral sector of the complex.

The protein localises to the cell membrane. It carries out the reaction a quinone + NADH + 5 H(+)(in) = a quinol + NAD(+) + 4 H(+)(out). In terms of biological role, NDH-1 shuttles electrons from NADH, via FMN and iron-sulfur (Fe-S) centers, to quinones in the respiratory chain. The immediate electron acceptor for the enzyme in this species is believed to be a menaquinone. Couples the redox reaction to proton translocation (for every two electrons transferred, four hydrogen ions are translocated across the cytoplasmic membrane), and thus conserves the redox energy in a proton gradient. This Symbiobacterium thermophilum (strain DSM 24528 / JCM 14929 / IAM 14863 / T) protein is NADH-quinone oxidoreductase subunit D 1.